The chain runs to 530 residues: UDP-glucuronosyltransferase 1A9 (530 aa).

The first 25 residues, 1–25 (MACTGWTSPLPLCVCLLLTCGFAEA), serve as a signal peptide directing secretion. Asn71 is a glycosylation site (N-linked (GlcNAc...) asparagine). Lys99 bears the N6-succinyllysine mark. N-linked (GlcNAc...) asparagine glycans are attached at residues Asn292 and Asn344. The chain crosses the membrane as a helical span at residues 488–504 (VIGFLLAVVLTVAFITF).

It belongs to the UDP-glycosyltransferase family. In terms of assembly, homodimer. Homooligomer. Interacts with UGT1A1, UGT1A3, UGT1A4, UGT1A6, UGT1A7, UGT1A8 and UGT1A10 to form heterodimers. Isoform 1 interacts with isoform 2/i2 suggesting that oligomerization is involved in negative regulation of transferase activity by isoform 2. Isoform 1 also interacts with respective i2 isoforms of UGT1A1, UGT1A3, UGT1A4, UGT1A6, UGT1A7, UGT1A8 and UGT1A10. As to expression, expressed in liver, kidney, colon, esophagus and small intestine.

It is found in the endoplasmic reticulum membrane. The enzyme catalyses glucuronate acceptor + UDP-alpha-D-glucuronate = acceptor beta-D-glucuronoside + UDP + H(+). The catalysed reaction is 2-hydroxy-17beta-estradiol + UDP-alpha-D-glucuronate = 2-hydroxy-17beta-estradiol 3-O-(beta-D-glucuronate) + UDP + H(+). It carries out the reaction 4-hydroxy-17beta-estradiol + UDP-alpha-D-glucuronate = 17beta-estradiol 4-O-(beta-D-glucuronate) + UDP + H(+). It catalyses the reaction 2-hydroxyestrone + UDP-alpha-D-glucuronate = 2-hydroxyestrone 3-O-(beta-D-glucuronate) + UDP + H(+). The enzyme catalyses 4-hydroxyestrone + UDP-alpha-D-glucuronate = estrone 4-O-(beta-D-glucuronate) + UDP + H(+). The catalysed reaction is prunetin + UDP-alpha-D-glucuronate = prunetin-5-O-beta-D-glucuronide + UDP. It carries out the reaction 8-iso-prostaglandin F2alpha + UDP-alpha-D-glucuronate = 8-iso-prostaglandin F2alpha-glucuronide + UDP + H(+). It catalyses the reaction 5-epi-5-F2t-IsoP + UDP-alpha-D-glucuronate = 5-epi-5-F2t-IsoP-glucuronide + UDP + H(+). The enzyme catalyses (5Z,8Z,11Z,14Z)-eicosatetraenoate + UDP-alpha-D-glucuronate = O-[(5Z),(8Z),(11Z),(14Z)-eicosatetraenoyl]-beta-D-glucuronate + UDP. The catalysed reaction is 15-hydroxy-(5Z,8Z,11Z,13E)-eicosatetraenoate + UDP-alpha-D-glucuronate = 15-O-(beta-D-glucuronosyl)-(5Z,8Z,11Z,14Z)-eicosatetraenoate + UDP + H(+). It carries out the reaction prostaglandin B1 + UDP-alpha-D-glucuronate = 15-O-(beta-D-glucuronosyl)-prostaglandin B1 + UDP + H(+). It catalyses the reaction (E)-ferulate + UDP-alpha-D-glucuronate = (E)-4-O-(beta-D-glucuronosyl)-ferulate + UDP + H(+). The enzyme catalyses (E)-ferulate + UDP-alpha-D-glucuronate = (E)-ferulic acid beta-D-glucuronate ester + UDP. The catalysed reaction is candesartan + UDP-alpha-D-glucuronate = candesartan O-beta-D-glucuronoside + UDP. It carries out the reaction SN-38 + UDP-alpha-D-glucuronate = SN-38 O-beta-D-glucuronide + UDP + H(+). It catalyses the reaction mycophenolate + UDP-alpha-D-glucuronate = mycophenolate 7-O-beta-D-glucuronide + UDP + H(+). Functionally, UDP-glucuronosyltransferase (UGT) that catalyzes phase II biotransformation reactions in which lipophilic substrates are conjugated with glucuronic acid to increase the metabolite's water solubility, thereby facilitating excretion into either the urine or bile. Essential for the elimination and detoxification of drugs, xenobiotics and endogenous compounds. Catalyzes the glucuronidation of endogenous estrogen hormones such as estradiol and estrone. Involved in the glucuronidation of arachidonic acid (AA) and AA-derived eicosanoids including 15-HETE, PGB1 and F2-isoprostanes (8-iso-PGF2alpha and 5-epi-5-F2t-IsoP). Glucuronates the phytochemical ferulic acid efficently at both the phenolic or the carboxylic acid group. Also catalyzes the glucuronidation of the isoflavones genistein, daidzein, glycitein, formononetin, biochanin A and prunetin, which are phytoestrogens with anticancer and cardiovascular properties. Involved in the glucuronidation of the AGTR1 angiotensin receptor antagonist caderastan, a drug which can inhibit the effect of angiotensin II. Involved in the biotransformation of 7-ethyl-10-hydroxycamptothecin (SN-38), the pharmacologically active metabolite of the anticancer drug irinotecan. Also metabolizes mycophenolate, an immunosuppressive agent. In terms of biological role, lacks UGT glucuronidation activity but acts as a negative regulator of isoform 1. In Homo sapiens (Human), this protein is UDP-glucuronosyltransferase 1A9.